We begin with the raw amino-acid sequence, 452 residues long: Pup--protein ligase (452 aa).

Mg(2+) is bound at residue glutamate 9. ATP is bound at residue arginine 53. Tyrosine 55 is a binding site for Mg(2+). Aspartate 57 (proton acceptor) is an active-site residue. Glutamate 63 is a Mg(2+) binding site. Threonine 66 and tryptophan 419 together coordinate ATP.

The protein belongs to the Pup ligase/Pup deamidase family. Pup-conjugating enzyme subfamily.

The catalysed reaction is ATP + [prokaryotic ubiquitin-like protein]-L-glutamate + [protein]-L-lysine = ADP + phosphate + N(6)-([prokaryotic ubiquitin-like protein]-gamma-L-glutamyl)-[protein]-L-lysine.. It functions in the pathway protein degradation; proteasomal Pup-dependent pathway. The protein operates within protein modification; protein pupylation. In terms of biological role, catalyzes the covalent attachment of the prokaryotic ubiquitin-like protein modifier Pup to the proteasomal substrate proteins, thereby targeting them for proteasomal degradation. This tagging system is termed pupylation. The ligation reaction involves the side-chain carboxylate of the C-terminal glutamate of Pup and the side-chain amino group of a substrate lysine. This Actinosynnema mirum (strain ATCC 29888 / DSM 43827 / JCM 3225 / NBRC 14064 / NCIMB 13271 / NRRL B-12336 / IMRU 3971 / 101) protein is Pup--protein ligase.